We begin with the raw amino-acid sequence, 272 residues long: Putative phosphoenolpyruvate synthase regulatory protein (272 aa).

Residue 152–159 (GVSRSGKT) coordinates ADP.

It belongs to the pyruvate, phosphate/water dikinase regulatory protein family. PSRP subfamily.

It catalyses the reaction [pyruvate, water dikinase] + ADP = [pyruvate, water dikinase]-phosphate + AMP + H(+). The catalysed reaction is [pyruvate, water dikinase]-phosphate + phosphate + H(+) = [pyruvate, water dikinase] + diphosphate. In terms of biological role, bifunctional serine/threonine kinase and phosphorylase involved in the regulation of the phosphoenolpyruvate synthase (PEPS) by catalyzing its phosphorylation/dephosphorylation. The chain is Putative phosphoenolpyruvate synthase regulatory protein from Alcanivorax borkumensis (strain ATCC 700651 / DSM 11573 / NCIMB 13689 / SK2).